The following is a 155-amino-acid chain: Pre-hexon-linking protein VIII (155 aa).

The propeptide occupies 44–84 (GVHRTKDIKPEDLVGRGIQLNSYQPPTTRLKPERVFQLAGG).

The protein belongs to the adenoviridae hexon-linking protein family. Interacts with the peripentonal hexons as well as the hexons in the facets. Part of a complex composed of the core-capsid bridging protein, the endosome lysis protein VI and the hexon-linking protein VIII; these interactions bridge the virus core to the capsid. Post-translationally, cleaved by the viral protease during virion maturation. May cause the middle segment to be shed from the capsid.

The protein resides in the virion. Its subcellular location is the host nucleus. Its function is as follows. Structural component of the virion that acts as a cement protein on the capsid interior and which glue the peripentonal hexons and group-of-nine hexons together. The chain is Pre-hexon-linking protein VIII from Bos taurus (Bovine).